The following is a 198-amino-acid chain: MSLIPVVVEQTNRGERSYDIYSRLLKDRIVFLGHPINDELSNLIIAQLLFLEAEDPDKDIHLYINSPGGSVTAALAMYDTIQYIKPDVATICMGQAASAGALLLASGTKGKRYALPNARVMIHQPAGGVQGKATEAEIHIKELLRLRERLNEILSKHTGKSVEQISKDVEQDYFMTAEEALEYGIIDEVITKNELKDK.

The active-site Nucleophile is the Ser-98. Residue His-123 is part of the active site.

This sequence belongs to the peptidase S14 family. In terms of assembly, fourteen ClpP subunits assemble into 2 heptameric rings which stack back to back to give a disk-like structure with a central cavity, resembling the structure of eukaryotic proteasomes.

It localises to the cytoplasm. The enzyme catalyses Hydrolysis of proteins to small peptides in the presence of ATP and magnesium. alpha-casein is the usual test substrate. In the absence of ATP, only oligopeptides shorter than five residues are hydrolyzed (such as succinyl-Leu-Tyr-|-NHMec, and Leu-Tyr-Leu-|-Tyr-Trp, in which cleavage of the -Tyr-|-Leu- and -Tyr-|-Trp bonds also occurs).. Its function is as follows. Cleaves peptides in various proteins in a process that requires ATP hydrolysis. Has a chymotrypsin-like activity. Plays a major role in the degradation of misfolded proteins. The polypeptide is ATP-dependent Clp protease proteolytic subunit (Halothermothrix orenii (strain H 168 / OCM 544 / DSM 9562)).